A 233-amino-acid polypeptide reads, in one-letter code: 5'-methylthioadenosine/S-adenosylhomocysteine nucleosidase (233 aa).

Glutamate 12 (proton acceptor) is an active-site residue. Residues glycine 78, isoleucine 152, and 173–174 contribute to the substrate site; that span reads ME. The active-site Proton donor is aspartate 197.

This sequence belongs to the PNP/UDP phosphorylase family. MtnN subfamily. In terms of assembly, homodimer.

It carries out the reaction S-adenosyl-L-homocysteine + H2O = S-(5-deoxy-D-ribos-5-yl)-L-homocysteine + adenine. The enzyme catalyses S-methyl-5'-thioadenosine + H2O = 5-(methylsulfanyl)-D-ribose + adenine. The catalysed reaction is 5'-deoxyadenosine + H2O = 5-deoxy-D-ribose + adenine. It participates in amino-acid biosynthesis; L-methionine biosynthesis via salvage pathway; S-methyl-5-thio-alpha-D-ribose 1-phosphate from S-methyl-5'-thioadenosine (hydrolase route): step 1/2. In terms of biological role, catalyzes the irreversible cleavage of the glycosidic bond in both 5'-methylthioadenosine (MTA) and S-adenosylhomocysteine (SAH/AdoHcy) to adenine and the corresponding thioribose, 5'-methylthioribose and S-ribosylhomocysteine, respectively. Also cleaves 5'-deoxyadenosine, a toxic by-product of radical S-adenosylmethionine (SAM) enzymes, into 5-deoxyribose and adenine. Thus, is required for in vivo function of the radical SAM enzymes biotin synthase and lipoic acid synthase, that are inhibited by 5'-deoxyadenosine accumulation. This Sodalis glossinidius (strain morsitans) protein is 5'-methylthioadenosine/S-adenosylhomocysteine nucleosidase.